The chain runs to 345 residues: Alanine racemase (345 aa).

Residue K33 is the Proton acceptor; specific for D-alanine of the active site. At K33 the chain carries N6-(pyridoxal phosphate)lysine. R128 lines the substrate pocket. Y242 acts as the Proton acceptor; specific for L-alanine in catalysis. M291 lines the substrate pocket.

This sequence belongs to the alanine racemase family. The cofactor is pyridoxal 5'-phosphate.

The enzyme catalyses L-alanine = D-alanine. The protein operates within amino-acid biosynthesis; D-alanine biosynthesis; D-alanine from L-alanine: step 1/1. Functionally, catalyzes the interconversion of L-alanine and D-alanine. May also act on other amino acids. The protein is Alanine racemase (alr) of Ruegeria sp. (strain TM1040) (Silicibacter sp.).